A 362-amino-acid polypeptide reads, in one-letter code: LILFFCLAQLWGCRAVPHGPILGYREPACDDVETEQAALAAVDYINKHLPRGYKHTLNQVDSVKVWPRRPAGEVFDIEIDTLETTCHVLDPTPLANCSVRQLTEHAVEGDCDFHVLKQDGQFSVLFAKCDSSPDSAEDVHKVCPNCPLLAPLNDSRVVHAAESALAAFNAQSNGSYLQLVEISRAQLVPLSASVSVEFAVAVTDCVAKEAYSPTKCNLLVEKQYGFCKGTVTAKVNEEDVAVTCTVFQTQPVVLQPQPAGADAGATPVVDAAATASPLADVPAASLVVGPMVVAVPPGIPPVHRSHYDLRHSFSGVASVESASGEAFHVGKTPKGAQPSIPAADGSVPVVRPCPGRIRHFKI.

The signal sequence occupies residues 1 to 15 (LILFFCLAQLWGCRA). One can recognise a Cystatin fetuin-A-type 1 domain in the interval 24–130 (YREPACDDVE…QFSVLFAKCD (107 aa)). 6 disulfide bridges follow: Cys29/Cys353, Cys86/Cys97, Cys111/Cys129, Cys143/Cys146, Cys205/Cys216, and Cys227/Cys244. N-linked (GlcNAc...) asparagine glycosylation occurs at Asn96. Phosphoserine is present on residues Ser131, Ser132, and Ser135. Positions 141-252 (KVCPNCPLLA…TCTVFQTQPV (112 aa)) constitute a Cystatin fetuin-A-type 2 domain. 2 N-linked (GlcNAc...) asparagine glycosylation sites follow: Asn153 and Asn173. 4 positions are modified to phosphoserine: Ser314, Ser318, Ser321, and Ser323. Thr332 carries O-linked (GalNAc...) threonine glycosylation.

The protein belongs to the fetuin family. In terms of processing, phosphorylated by FAM20C in the extracellular medium. In terms of tissue distribution, expressed by the liver and secreted in plasma.

The protein localises to the secreted. This is Alpha-2-HS-glycoprotein (AHSG) from Sus scrofa (Pig).